We begin with the raw amino-acid sequence, 1025 residues long: Glycine dehydrogenase (decarboxylating), mitochondrial (1025 aa).

Residues 1–35 (MQLCARAWGLRLGRGAGGGHRLARGTGLSWAQRSR) constitute a mitochondrion transit peptide. Residues 16 to 51 (AGGGHRLARGTGLSWAQRSRDSSGGGGGGGGGDRGA) are disordered. Residues 38 to 50 (SGGGGGGGGGDRG) are compositionally biased toward gly residues. Lys-452, Lys-519, Lys-653, and Lys-669 each carry N6-acetyllysine. Lys-759 carries the N6-(pyridoxal phosphate)lysine modification.

This sequence belongs to the GcvP family. In terms of assembly, interacts with GCSH. Homodimer. The glycine cleavage system is composed of four proteins: P (GLDC), T (GCST), L (DLD) and H (GCSH). Pyridoxal 5'-phosphate is required as a cofactor.

The protein resides in the mitochondrion. The catalysed reaction is N(6)-[(R)-lipoyl]-L-lysyl-[glycine-cleavage complex H protein] + glycine + H(+) = N(6)-[(R)-S(8)-aminomethyldihydrolipoyl]-L-lysyl-[glycine-cleavage complex H protein] + CO2. Its activity is regulated as follows. Stimulated by lipoic acid. Inhibited in presence of methylamine. Functionally, the glycine cleavage system catalyzes the degradation of glycine. The P protein (GLDC) binds the alpha-amino group of glycine through its pyridoxal phosphate cofactor; CO(2) is released and the remaining methylamine moiety is then transferred to the lipoamide cofactor of the H protein (GCSH). This Mus musculus (Mouse) protein is Glycine dehydrogenase (decarboxylating), mitochondrial.